The chain runs to 373 residues: Peptide chain release factor 1-like, mitochondrial (373 aa).

The N-terminal 25 residues, M1–S25, are a transit peptide targeting the mitochondrion. Residues Q56 to L110 adopt a coiled-coil conformation. The tract at residues P229–L293 is GGQ domain. Positions G243–Q245 match the GGQ motif. The residue at position 245 (Q245) is an N5-methylglutamine.

The protein belongs to the prokaryotic/mitochondrial release factor family. In terms of processing, methylation of glutamine in the GGQ triplet by HEMK1 is conserved from bacteria to mammals.

The protein localises to the mitochondrion. Mitochondrial peptide chain release factor that directs the termination of translation in response to the peptide chain termination codons UAA and UAG. This Mus musculus (Mouse) protein is Peptide chain release factor 1-like, mitochondrial (Mtrf1l).